We begin with the raw amino-acid sequence, 193 residues long: Corrinoid adenosyltransferase (193 aa).

ATP contacts are provided by residues 10 to 18, Lys28, 137 to 142, and Asn163; these read TRTGDDGTT and RRAERS.

The protein belongs to the Cob(I)alamin adenosyltransferase family.

Its subcellular location is the cytoplasm. The enzyme catalyses 2 cob(II)yrinate a,c diamide + reduced [electron-transfer flavoprotein] + 2 ATP = 2 adenosylcob(III)yrinate a,c-diamide + 2 triphosphate + oxidized [electron-transfer flavoprotein] + 3 H(+). The catalysed reaction is 2 cob(II)alamin + reduced [electron-transfer flavoprotein] + 2 ATP = 2 adenosylcob(III)alamin + 2 triphosphate + oxidized [electron-transfer flavoprotein] + 3 H(+). It functions in the pathway cofactor biosynthesis; adenosylcobalamin biosynthesis; adenosylcobalamin from cob(II)yrinate a,c-diamide: step 2/7. The sequence is that of Corrinoid adenosyltransferase from Mycobacterium bovis (strain ATCC BAA-935 / AF2122/97).